The following is a 344-amino-acid chain: Dihydroorotase (344 aa).

2 residues coordinate Zn(2+): histidine 13 and histidine 15. Substrate contacts are provided by residues 15–17 (HFR) and asparagine 41. Positions 98, 135, and 173 each coordinate Zn(2+). Lysine 98 bears the N6-carboxylysine mark. A substrate-binding site is contributed by histidine 135. Leucine 218 provides a ligand contact to substrate. Aspartate 246 contacts Zn(2+). Residue aspartate 246 is part of the active site. Substrate is bound by residues histidine 250 and alanine 262.

Belongs to the metallo-dependent hydrolases superfamily. DHOase family. Class II DHOase subfamily. Homodimer. The cofactor is Zn(2+).

It catalyses the reaction (S)-dihydroorotate + H2O = N-carbamoyl-L-aspartate + H(+). It participates in pyrimidine metabolism; UMP biosynthesis via de novo pathway; (S)-dihydroorotate from bicarbonate: step 3/3. Functionally, catalyzes the reversible cyclization of carbamoyl aspartate to dihydroorotate. The protein is Dihydroorotase of Shewanella sediminis (strain HAW-EB3).